Reading from the N-terminus, the 425-residue chain is MVKLSIVLTPQFLSHDQSQLTKELQQHVKSVTCPCEYLRKVINSLAVYRHRETDFGVGVRDHPGQHGKTPSPQKLDNLIIIIIGFLRRYTFNILFCTSCLCVSFLKTIFWSRNGHDGSMDVQQRAWRSNRSRQKGLRSICMHTKKRVSSFRGNKIGLKDVITLRRHVETKVRAKIRKRKVTTKINRHDKINGKRKTARKQKMFQRAQELRRRAEDYHKCKIPPSARKPLCNWVRMVAAEHRHSSGLPYWPYLTAETLKNRMGRQPPPPTQQHSITDNSLSLKTPTECLLTPLPPSVDDNIKECPLAPLPPSPLPPSVDDNLKECLFVPLPPSPLPPSVDDNLKTPPLATQEAEVEKPPKPKRWRVDEVEQSPKPKRRRVDEVEQSPKPKRQREAEAQQLPKPKRRRLSKLRTRHCTQAWAIRINP.

The interval 332 to 414 is disordered; the sequence is SPLPPSVDDN…RRLSKLRTRH (83 aa). Residues 353-395 are compositionally biased toward basic and acidic residues; sequence EVEKPPKPKRWRVDEVEQSPKPKRRRVDEVEQSPKPKRQREAE. Over residues 401–414 the composition is skewed to basic residues; the sequence is KPKRRRLSKLRTRH.

The protein belongs to the NPIP family.

This chain is Nuclear pore complex-interacting protein family member B6 (NPIPB6), found in Homo sapiens (Human).